A 501-amino-acid polypeptide reads, in one-letter code: Spore development regulator VOSA (501 aa).

3 disordered regions span residues 26–55, 67–88, and 228–274; these read GQFG…GQEP, PQRA…IDPP, and AMTT…DTRG. Over residues 35–50 the composition is skewed to polar residues; sequence PPQAETQMSAQASAQA. Positions 52 to 223 constitute a Velvet domain; that stretch reads GQEPEPDYKL…SDQGVRLRVR (172 aa). Composition is skewed to basic and acidic residues over residues 67–85 and 237–252; these read PQRA…RKPI and QHAE…DRKQ. Over residues 253–271 the composition is skewed to polar residues; the sequence is TSAVSRHSSINENDSTPTD. The short motif at 364–371 is the Nuclear localization signal element; it reads MSSHHGYT. 2 disordered regions span residues 378 to 455 and 474 to 501; these read FAPH…QQTP and PGQL…EPGA.

This sequence belongs to the velvet family. VosA subfamily. In terms of assembly, forms a heterodimeric complex with VELB; the formation of the VELB-VOSA complex is light-dependent.

The protein resides in the nucleus. Its function is as follows. Component of the VELB-VOSA heterodimeric complex that plays a dual role in activating genes associated with spore maturation and repressing certain development-associated genes. The complex binds DNA through the DNA-binding domain of VOSA that recognizes an 11-nucleotide consensus sequence 5'-CTGGCCGCGGC-3' consisting of two motifs in the promoters of key developmental regulatory genes. Appears dispensable for the development and pathogenicity. The polypeptide is Spore development regulator VOSA (Pyricularia oryzae (strain 70-15 / ATCC MYA-4617 / FGSC 8958) (Rice blast fungus)).